A 254-amino-acid polypeptide reads, in one-letter code: MTSAAAPNTLNRPSIDPEEVEKFSRIAAEWWDPDSKFKPLHKFNPIRLGFMRDTICDHFGLSGERPFEGLRILDIGCGGGLVCEPMARLGAHVTGVDAAEANIKTASVHADEQGLEIDYRHGVAEQLIEQDEAPFDVVLNLEVMEHVANPHTFLVDCARLVKPGGLMICATINRTSKAFALAIVGAEWVMGWLPRGTHRFHKLVKPSQIRTALREGGMSLRAPVGVSYNPLTDQFSLGEDTAVNYMMVAEKPAG.

Arg-47, Gly-76, Asp-97, and Leu-141 together coordinate S-adenosyl-L-methionine.

Belongs to the methyltransferase superfamily. UbiG/COQ3 family.

The catalysed reaction is a 3-demethylubiquinol + S-adenosyl-L-methionine = a ubiquinol + S-adenosyl-L-homocysteine + H(+). The enzyme catalyses a 3-(all-trans-polyprenyl)benzene-1,2-diol + S-adenosyl-L-methionine = a 2-methoxy-6-(all-trans-polyprenyl)phenol + S-adenosyl-L-homocysteine + H(+). Its pathway is cofactor biosynthesis; ubiquinone biosynthesis. Functionally, O-methyltransferase that catalyzes the 2 O-methylation steps in the ubiquinone biosynthetic pathway. The protein is Ubiquinone biosynthesis O-methyltransferase of Maricaulis maris (strain MCS10) (Caulobacter maris).